Reading from the N-terminus, the 308-residue chain is Peptidyl-prolyl cis-trans isomerase CYP8 (308 aa).

A PPIase cyclophilin-type domain is found at 56–215 (FTDPESSEEA…QPITIGYISS (160 aa)).

The catalysed reaction is [protein]-peptidylproline (omega=180) = [protein]-peptidylproline (omega=0). Its function is as follows. PPIases accelerate the folding of proteins. It catalyzes the cis-trans isomerization of proline imidic peptide bonds in oligopeptides. The polypeptide is Peptidyl-prolyl cis-trans isomerase CYP8 (CPR8) (Saccharomyces cerevisiae (strain ATCC 204508 / S288c) (Baker's yeast)).